The sequence spans 630 residues: Biosynthetic arginine decarboxylase (630 aa).

Lysine 99 carries the N6-(pyridoxal phosphate)lysine modification. 281–291 (VDIGGGLGVDY) is a binding site for substrate.

It belongs to the Orn/Lys/Arg decarboxylase class-II family. SpeA subfamily. Mg(2+) is required as a cofactor. It depends on pyridoxal 5'-phosphate as a cofactor.

The catalysed reaction is L-arginine + H(+) = agmatine + CO2. Its function is as follows. Catalyzes the biosynthesis of agmatine from arginine. The chain is Biosynthetic arginine decarboxylase from Bacteroides thetaiotaomicron (strain ATCC 29148 / DSM 2079 / JCM 5827 / CCUG 10774 / NCTC 10582 / VPI-5482 / E50).